A 109-amino-acid chain; its full sequence is Thiosulfate sulfurtransferase GlpE (109 aa).

The Rhodanese domain occupies 17-105 (HQQTAVLVDI…WHRHFPAEVA (89 aa)). C65 acts as the Cysteine persulfide intermediate in catalysis.

This sequence belongs to the GlpE family.

It localises to the cytoplasm. The enzyme catalyses thiosulfate + hydrogen cyanide = thiocyanate + sulfite + 2 H(+). It carries out the reaction thiosulfate + [thioredoxin]-dithiol = [thioredoxin]-disulfide + hydrogen sulfide + sulfite + 2 H(+). Functionally, transferase that catalyzes the transfer of sulfur from thiosulfate to thiophilic acceptors such as cyanide or dithiols. May function in a CysM-independent thiosulfate assimilation pathway by catalyzing the conversion of thiosulfate to sulfite, which can then be used for L-cysteine biosynthesis. In Klebsiella pneumoniae (strain 342), this protein is Thiosulfate sulfurtransferase GlpE.